The following is a 269-amino-acid chain: MMHNSTEESEWEVRPGGMLVQRRDDAASSDHKPLQDPDSASAAFAQTIRITVSHGSSHHDLHISAHATFGDVKKALVQKTGLEASELKILFRGVERDDAEQLQAAGVKDASKLVVVVEDTNKRVEQQPPVVTKEMEKAIAAVNAVTGEVDKLSDRVVALEVAVNGGTQVAVREFDMAAELLMRQLLKLDGIEAEGDAKVQRKAEVRRIQNLQEAVDKLKARCSNPFVDQSKAAAVSTEWESFGNGVGSLNPPPPASPSANVTQDWEKFD.

The interval 1-40 (MMHNSTEESEWEVRPGGMLVQRRDDAASSDHKPLQDPDSA) is disordered. Residues 21 to 35 (QRRDDAASSDHKPLQ) show a composition bias toward basic and acidic residues. A Ubiquitin-like domain is found at 46–122 (QTIRITVSHG…LVVVVEDTNK (77 aa)). Residues 138-219 (AIAAVNAVTG…NLQEAVDKLK (82 aa)) form the BAG domain. Positions 241-269 (SFGNGVGSLNPPPPASPSANVTQDWEKFD) are disordered.

Binds to the ATPase domain of HSP70/HSC70 chaperones. Interacts with HSP70-1. In terms of tissue distribution, detected in stems, leaves, flowers and roots.

Co-chaperone that regulates diverse cellular pathways, such as programmed cell death and stress responses. The sequence is that of BAG family molecular chaperone regulator 4 (BAG4) from Arabidopsis thaliana (Mouse-ear cress).